We begin with the raw amino-acid sequence, 225 residues long: PKHD-type hydroxylase KPK_3192 (225 aa).

One can recognise a Fe2OG dioxygenase domain in the interval 78 to 177 (TISAPLFNRY…RQASFLWIQS (100 aa)). Fe cation-binding residues include histidine 96, aspartate 98, and histidine 158. Arginine 168 is a 2-oxoglutarate binding site.

It depends on Fe(2+) as a cofactor. L-ascorbate serves as cofactor.

The sequence is that of PKHD-type hydroxylase KPK_3192 from Klebsiella pneumoniae (strain 342).